The primary structure comprises 156 residues: Small ribosomal subunit protein uS7 (156 aa).

It belongs to the universal ribosomal protein uS7 family. In terms of assembly, part of the 30S ribosomal subunit. Contacts proteins S9 and S11.

Functionally, one of the primary rRNA binding proteins, it binds directly to 16S rRNA where it nucleates assembly of the head domain of the 30S subunit. Is located at the subunit interface close to the decoding center, probably blocks exit of the E-site tRNA. This is Small ribosomal subunit protein uS7 from Hyphomonas neptunium (strain ATCC 15444).